An 801-amino-acid polypeptide reads, in one-letter code: Cadherin-20 (801 aa).

The first 34 residues, 1-34 (MWTSGRMSNAKNWLGLGMSLYFWGLMDLTTTVLS), serve as a signal peptide directing secretion. Positions 35 to 59 (DTPTPQGELEALLSDKPQSHQRTKR) are excised as a propeptide. Residues 60 to 619 (SWVWNQFFVL…AYMLPVSLSR (560 aa)) lie on the Extracellular side of the membrane. 5 consecutive Cadherin domains span residues 61–165 (WVWN…EPKF), 166–274 (LDGP…PPRF), 275–389 (PQKH…PPVF), 390–494 (EPGF…APEF), and 494–610 (FPRF…SPEA). N-linked (GlcNAc...) asparagine glycosylation occurs at Asn-261. Residues Asn-420, Asn-461, and Asn-542 are each glycosylated (N-linked (GlcNAc...) asparagine). Residues 620 to 640 (GALIAILACIFVLLVLVLLIL) traverse the membrane as a helical segment. Over 641-801 (SMRRHRKQPY…GASEGPAPLW (161 aa)) the chain is Cytoplasmic.

Expressed in placenta, adult brain, and fetal brain.

It is found in the cell membrane. Cadherins are calcium-dependent cell adhesion proteins. They preferentially interact with themselves in a homophilic manner in connecting cells; cadherins may thus contribute to the sorting of heterogeneous cell types. The polypeptide is Cadherin-20 (CDH20) (Homo sapiens (Human)).